We begin with the raw amino-acid sequence, 264 residues long: Glutamate racemase (264 aa).

Substrate contacts are provided by residues 10–11 and 42–43; these read DS and YG. The active-site Proton donor/acceptor is cysteine 73. Substrate is bound at residue 74–75; the sequence is NT. Residue cysteine 183 is the Proton donor/acceptor of the active site. 184 to 185 is a binding site for substrate; that stretch reads TH.

It belongs to the aspartate/glutamate racemases family.

It carries out the reaction L-glutamate = D-glutamate. It participates in cell wall biogenesis; peptidoglycan biosynthesis. In terms of biological role, provides the (R)-glutamate required for cell wall biosynthesis. The polypeptide is Glutamate racemase (Streptococcus mutans serotype c (strain ATCC 700610 / UA159)).